The following is a 726-amino-acid chain: Peroxisomal fatty acid beta-oxidation multifunctional protein (726 aa).

This sequence in the N-terminal section; belongs to the enoyl-CoA hydratase/isomerase family. In the central section; belongs to the 3-hydroxyacyl-CoA dehydrogenase family. In terms of assembly, monomer.

The protein localises to the peroxisome. It localises to the cytoplasm. The protein resides in the cytoskeleton. The catalysed reaction is a (3S)-3-hydroxyacyl-CoA = a (2E)-enoyl-CoA + H2O. It carries out the reaction a 4-saturated-(3S)-3-hydroxyacyl-CoA = a (3E)-enoyl-CoA + H2O. The enzyme catalyses a (3Z)-enoyl-CoA = a 4-saturated (2E)-enoyl-CoA. It catalyses the reaction a (3E)-enoyl-CoA = a 4-saturated (2E)-enoyl-CoA. The catalysed reaction is (3S)-3-hydroxybutanoyl-CoA = (3R)-3-hydroxybutanoyl-CoA. It carries out the reaction a (3S)-3-hydroxyacyl-CoA + NAD(+) = a 3-oxoacyl-CoA + NADH + H(+). It participates in lipid metabolism; fatty acid beta-oxidation. In terms of biological role, multifunctional enzyme involved in fatty acid beta-oxidation. Also binds to RNA and microtubules. Possible role in subcellular mRNA localization and RNA-cytoskeleton interactions. This Oryza sativa subsp. japonica (Rice) protein is Peroxisomal fatty acid beta-oxidation multifunctional protein (MFP).